Here is a 325-residue protein sequence, read N- to C-terminus: Deoxyhypusine hydroxylase (325 aa).

At Ser2 the chain carries N-acetylserine. 2 HEAT-like PBS-type repeats span residues 77-103 (LKHE…VMLD) and 110-136 (VRHE…AAKE). His79, Glu80, His112, and Glu113 together coordinate Fe cation. At Ser126 the chain carries Phosphoserine. Position 187 is a phosphothreonine (Thr187). HEAT-like PBS-type repeat units follow at residues 202 to 231 (LFQR…FSAE), 235 to 261 (FKHE…VLGR), and 268 to 294 (VRHE…YLND). Residues His237, Glu238, His270, and Glu271 each coordinate Fe cation. The residue at position 281 (Ser281) is a Phosphoserine.

The protein belongs to the deoxyhypusine hydroxylase family. The cofactor is Fe(2+).

The protein resides in the cytoplasm. Its subcellular location is the nucleus. The catalysed reaction is [eIF5A protein]-deoxyhypusine + AH2 + O2 = [eIF5A protein]-hypusine + A + H2O. It participates in protein modification; eIF5A hypusination. In terms of biological role, catalyzes the hydroxylation of the N(6)-(4-aminobutyl)-L-lysine intermediate to form hypusine, an essential post-translational modification only found in mature eIF-5A factor. This is Deoxyhypusine hydroxylase from Saccharomyces cerevisiae (strain ATCC 204508 / S288c) (Baker's yeast).